Reading from the N-terminus, the 307-residue chain is tRNA(Met) cytidine acetate ligase (307 aa).

ATP is bound by residues 12 to 25, Gly106, Asn163, and Arg188; that span reads VVEY…HIYQ.

This sequence belongs to the TmcAL family.

Its subcellular location is the cytoplasm. It carries out the reaction cytidine(34) in elongator tRNA(Met) + acetate + ATP = N(4)-acetylcytidine(34) in elongator tRNA(Met) + AMP + diphosphate. In terms of biological role, catalyzes the formation of N(4)-acetylcytidine (ac(4)C) at the wobble position of elongator tRNA(Met), using acetate and ATP as substrates. First activates an acetate ion to form acetyladenylate (Ac-AMP) and then transfers the acetyl group to tRNA to form ac(4)C34. In Mycoplasmopsis synoviae (strain 53) (Mycoplasma synoviae), this protein is tRNA(Met) cytidine acetate ligase.